A 378-amino-acid chain; its full sequence is Queuine tRNA-ribosyltransferase (378 aa).

Aspartate 89 functions as the Proton acceptor in the catalytic mechanism. Substrate is bound by residues 89-93 (DSGGF), aspartate 143, glutamine 194, and glycine 221. Residues 252–258 (GVGTPAN) form an RNA binding region. Aspartate 271 (nucleophile) is an active-site residue. Zn(2+) is bound by residues cysteine 309, cysteine 311, cysteine 314, and histidine 340.

It belongs to the queuine tRNA-ribosyltransferase family. Homodimer. Within each dimer, one monomer is responsible for RNA recognition and catalysis, while the other monomer binds to the replacement base PreQ1. The cofactor is Zn(2+).

It carries out the reaction 7-aminomethyl-7-carbaguanine + guanosine(34) in tRNA = 7-aminomethyl-7-carbaguanosine(34) in tRNA + guanine. The protein operates within tRNA modification; tRNA-queuosine biosynthesis. Functionally, catalyzes the base-exchange of a guanine (G) residue with the queuine precursor 7-aminomethyl-7-deazaguanine (PreQ1) at position 34 (anticodon wobble position) in tRNAs with GU(N) anticodons (tRNA-Asp, -Asn, -His and -Tyr). Catalysis occurs through a double-displacement mechanism. The nucleophile active site attacks the C1' of nucleotide 34 to detach the guanine base from the RNA, forming a covalent enzyme-RNA intermediate. The proton acceptor active site deprotonates the incoming PreQ1, allowing a nucleophilic attack on the C1' of the ribose to form the product. After dissociation, two additional enzymatic reactions on the tRNA convert PreQ1 to queuine (Q), resulting in the hypermodified nucleoside queuosine (7-(((4,5-cis-dihydroxy-2-cyclopenten-1-yl)amino)methyl)-7-deazaguanosine). The chain is Queuine tRNA-ribosyltransferase from Lachnospira eligens (strain ATCC 27750 / DSM 3376 / VPI C15-48 / C15-B4) (Eubacterium eligens).